We begin with the raw amino-acid sequence, 648 residues long: Putative potassium transport protein DDB_G0292412 (648 aa).

The helical transmembrane segment at 48–68 threads the bilayer; the sequence is LFLLVILVQLGSTVLLTLPIV. N-linked (GlcNAc...) asparagine glycosylation is present at N81. Disordered regions lie at residues 106 to 145 and 223 to 261; these read HDFK…DDND and QQQQ…DSQS. Residues 110–129 are compositionally biased toward acidic residues; the sequence is DDDDENDNNNNEENDDNDDE. Residues 199–227 are a coiled coil; it reads IIQQQQQQQQQQQQQQQQQQQQQQQQQQQ. 6 N-linked (GlcNAc...) asparagine glycosylation sites follow: N239, N243, N247, N248, N254, and N257. A run of 6 helical transmembrane segments spans residues 313-333, 353-373, 385-405, 443-463, 472-491, and 505-525; these read LLVI…ISIG, GWWW…LALF, FLLI…PVFL, VQLF…MALL, NMNY…STRT, and SVLL…IISL. N536 carries N-linked (GlcNAc...) asparagine glycosylation. 3 helical membrane passes run 550–570, 571–591, and 592–612; these read IFVP…LLES, GVIT…NVGL, and SISI…MLAG.

It belongs to the TrkH potassium transport family.

It is found in the membrane. In terms of biological role, may function as a potassium transporter. This chain is Putative potassium transport protein DDB_G0292412, found in Dictyostelium discoideum (Social amoeba).